The sequence spans 218 residues: Ribose-5-phosphate isomerase A (218 aa).

Residues 28-31 (TGST), 81-84 (DGAD), and 94-97 (KGGG) contribute to the substrate site. The active-site Proton acceptor is the glutamate 103. Lysine 121 contacts substrate.

It belongs to the ribose 5-phosphate isomerase family. As to quaternary structure, homodimer.

It catalyses the reaction aldehydo-D-ribose 5-phosphate = D-ribulose 5-phosphate. It participates in carbohydrate degradation; pentose phosphate pathway; D-ribose 5-phosphate from D-ribulose 5-phosphate (non-oxidative stage): step 1/1. Catalyzes the reversible conversion of ribose-5-phosphate to ribulose 5-phosphate. This chain is Ribose-5-phosphate isomerase A, found in Vibrio campbellii (strain ATCC BAA-1116).